Reading from the N-terminus, the 194-residue chain is Peptidyl-tRNA hydrolase (194 aa).

Tyr17 is a binding site for tRNA. The Proton acceptor role is filled by His22. Positions 69, 71, and 117 each coordinate tRNA.

It belongs to the PTH family. As to quaternary structure, monomer.

It is found in the cytoplasm. It carries out the reaction an N-acyl-L-alpha-aminoacyl-tRNA + H2O = an N-acyl-L-amino acid + a tRNA + H(+). Its function is as follows. Hydrolyzes ribosome-free peptidyl-tRNAs (with 1 or more amino acids incorporated), which drop off the ribosome during protein synthesis, or as a result of ribosome stalling. Catalyzes the release of premature peptidyl moieties from peptidyl-tRNA molecules trapped in stalled 50S ribosomal subunits, and thus maintains levels of free tRNAs and 50S ribosomes. The sequence is that of Peptidyl-tRNA hydrolase from Renibacterium salmoninarum (strain ATCC 33209 / DSM 20767 / JCM 11484 / NBRC 15589 / NCIMB 2235).